The chain runs to 327 residues: Tetraacyldisaccharide 4'-kinase (327 aa).

52-59 (TAGGAGKT) is an ATP binding site.

This sequence belongs to the LpxK family.

It catalyses the reaction a lipid A disaccharide + ATP = a lipid IVA + ADP + H(+). Its pathway is glycolipid biosynthesis; lipid IV(A) biosynthesis; lipid IV(A) from (3R)-3-hydroxytetradecanoyl-[acyl-carrier-protein] and UDP-N-acetyl-alpha-D-glucosamine: step 6/6. Its function is as follows. Transfers the gamma-phosphate of ATP to the 4'-position of a tetraacyldisaccharide 1-phosphate intermediate (termed DS-1-P) to form tetraacyldisaccharide 1,4'-bis-phosphate (lipid IVA). The chain is Tetraacyldisaccharide 4'-kinase from Gluconacetobacter diazotrophicus (strain ATCC 49037 / DSM 5601 / CCUG 37298 / CIP 103539 / LMG 7603 / PAl5).